A 202-amino-acid polypeptide reads, in one-letter code: Orotate phosphoribosyltransferase (202 aa).

113 to 121 (EDIITTGGS) is a binding site for 5-phospho-alpha-D-ribose 1-diphosphate. 2 residues coordinate orotate: threonine 117 and arginine 145.

The protein belongs to the purine/pyrimidine phosphoribosyltransferase family. PyrE subfamily. In terms of assembly, homodimer. Mg(2+) is required as a cofactor.

It carries out the reaction orotidine 5'-phosphate + diphosphate = orotate + 5-phospho-alpha-D-ribose 1-diphosphate. It functions in the pathway pyrimidine metabolism; UMP biosynthesis via de novo pathway; UMP from orotate: step 1/2. Functionally, catalyzes the transfer of a ribosyl phosphate group from 5-phosphoribose 1-diphosphate to orotate, leading to the formation of orotidine monophosphate (OMP). The protein is Orotate phosphoribosyltransferase of Sulfurimonas denitrificans (strain ATCC 33889 / DSM 1251) (Thiomicrospira denitrificans (strain ATCC 33889 / DSM 1251)).